We begin with the raw amino-acid sequence, 347 residues long: Phenylalanine--tRNA ligase alpha subunit (347 aa).

Glutamate 261 is a Mg(2+) binding site.

This sequence belongs to the class-II aminoacyl-tRNA synthetase family. Phe-tRNA synthetase alpha subunit type 1 subfamily. As to quaternary structure, tetramer of two alpha and two beta subunits. It depends on Mg(2+) as a cofactor.

The protein resides in the cytoplasm. The enzyme catalyses tRNA(Phe) + L-phenylalanine + ATP = L-phenylalanyl-tRNA(Phe) + AMP + diphosphate + H(+). This is Phenylalanine--tRNA ligase alpha subunit from Streptococcus pyogenes serotype M1.